A 768-amino-acid polypeptide reads, in one-letter code: Histone-lysine N-methyltransferase, H3 lysine-36 specific (768 aa).

Positions 45–90 (AEVMACDCKPGPTACDEDSGCINRLTSIECVRCCKGCQNKRFQGKK) constitute an AWS domain. The region spanning 92–209 (ASVDVISTEK…RGEEVTFDYN (118 aa)) is the SET domain. Residues 216 to 232 (EAQACYCGEKNCVGFLG) enclose the Post-SET domain. Residues 411-452 (KIDPDGDEHSVSRGTSEEVTKESSKSEEPNDVEVVKVNKKAD) show a composition bias toward basic and acidic residues. Disordered regions lie at residues 411 to 508 (KIDP…KGWQ), 533 to 610 (KASR…VNAQ), and 680 to 768 (VVKR…IDLE). The span at 453–469 (NNGNGVTDSPSTRSESP) shows a compositional bias: polar residues. The WW domain occupies 501–534 (RSLPKGWQFANDPQGKVYYYNLELNIQQWDFPKA). Composition is skewed to basic and acidic residues over residues 555 to 568 (NRRD…ETRE), 682 to 734 (KRLE…KGEE), and 755 to 768 (TVKK…IDLE).

It belongs to the class V-like SAM-binding methyltransferase superfamily. Histone-lysine methyltransferase family. SET2 subfamily.

It localises to the nucleus. It is found in the chromosome. The catalysed reaction is L-lysyl(36)-[histone H3] + 3 S-adenosyl-L-methionine = N(6),N(6),N(6)-trimethyl-L-lysyl(36)-[histone H3] + 3 S-adenosyl-L-homocysteine + 3 H(+). Histone methyltransferase that trimethylates histone H3 'Lys-36' forming H3K36me3. Involved in transcription elongation as well as in transcription repression. This is Histone-lysine N-methyltransferase, H3 lysine-36 specific (set-2) from Yarrowia lipolytica (strain CLIB 122 / E 150) (Yeast).